The chain runs to 208 residues: Fibroblast growth factor-binding protein 2 (208 aa).

The N-terminal stretch at 1–19 is a signal peptide; sequence MKRVALLFLVVICGMGGLG. 3 cysteine pairs are disulfide-bonded: Cys-43–Cys-59, Cys-68–Cys-102, and Cys-77–Cys-113. The interval 130-181 is disordered; it reads EPEDGANRDKSSQKTSASVRGAGKSSVKKTGKPAVLPRIKPTQHGQGSENET. A disulfide bridge connects residues Cys-191 and Cys-199.

Belongs to the fibroblast growth factor-binding protein family.

The protein resides in the secreted. The protein localises to the extracellular space. This Gallus gallus (Chicken) protein is Fibroblast growth factor-binding protein 2 (FGFBP2).